A 259-amino-acid chain; its full sequence is 1-(5-phosphoribosyl)-5-[(5-phosphoribosylamino)methylideneamino] imidazole-4-carboxamide isomerase (259 aa).

Aspartate 8 serves as the catalytic Proton acceptor. Aspartate 129 serves as the catalytic Proton donor.

This sequence belongs to the HisA/HisF family.

Its subcellular location is the cytoplasm. The catalysed reaction is 1-(5-phospho-beta-D-ribosyl)-5-[(5-phospho-beta-D-ribosylamino)methylideneamino]imidazole-4-carboxamide = 5-[(5-phospho-1-deoxy-D-ribulos-1-ylimino)methylamino]-1-(5-phospho-beta-D-ribosyl)imidazole-4-carboxamide. The protein operates within amino-acid biosynthesis; L-histidine biosynthesis; L-histidine from 5-phospho-alpha-D-ribose 1-diphosphate: step 4/9. This Pelotomaculum thermopropionicum (strain DSM 13744 / JCM 10971 / SI) protein is 1-(5-phosphoribosyl)-5-[(5-phosphoribosylamino)methylideneamino] imidazole-4-carboxamide isomerase.